The sequence spans 737 residues: Probable beta-glucosidase L (737 aa).

The N-terminal stretch at 1-19 (MRSLIRSGALNAFLAASLA) is a signal peptide. Residue Asn225 is glycosylated (N-linked (GlcNAc...) asparagine). The active site involves Asp253. Asn340, Asn365, and Asn608 each carry an N-linked (GlcNAc...) asparagine glycan.

This sequence belongs to the glycosyl hydrolase 3 family.

It is found in the secreted. The catalysed reaction is Hydrolysis of terminal, non-reducing beta-D-glucosyl residues with release of beta-D-glucose.. It functions in the pathway glycan metabolism; cellulose degradation. In terms of biological role, beta-glucosidases are one of a number of cellulolytic enzymes involved in the degradation of cellulosic biomass. Catalyzes the last step releasing glucose from the inhibitory cellobiose. This Emericella nidulans (strain FGSC A4 / ATCC 38163 / CBS 112.46 / NRRL 194 / M139) (Aspergillus nidulans) protein is Probable beta-glucosidase L (bglL).